Consider the following 302-residue polypeptide: Probable 2-(5''-triphosphoribosyl)-3'-dephosphocoenzyme-A synthase 1 (302 aa).

The protein belongs to the CitG/MdcB family.

The enzyme catalyses 3'-dephospho-CoA + ATP = 2'-(5''-triphospho-alpha-D-ribosyl)-3'-dephospho-CoA + adenine. The chain is Probable 2-(5''-triphosphoribosyl)-3'-dephosphocoenzyme-A synthase 1 from Salmonella typhi.